A 177-amino-acid chain; its full sequence is Protein GrpE (177 aa).

Belongs to the GrpE family. As to quaternary structure, homodimer.

It localises to the cytoplasm. Functionally, participates actively in the response to hyperosmotic and heat shock by preventing the aggregation of stress-denatured proteins, in association with DnaK and GrpE. It is the nucleotide exchange factor for DnaK and may function as a thermosensor. Unfolded proteins bind initially to DnaJ; upon interaction with the DnaJ-bound protein, DnaK hydrolyzes its bound ATP, resulting in the formation of a stable complex. GrpE releases ADP from DnaK; ATP binding to DnaK triggers the release of the substrate protein, thus completing the reaction cycle. Several rounds of ATP-dependent interactions between DnaJ, DnaK and GrpE are required for fully efficient folding. This is Protein GrpE from Thermus thermophilus (strain ATCC BAA-163 / DSM 7039 / HB27).